We begin with the raw amino-acid sequence, 144 residues long: Acidic phospholipase A2 (144 aa).

The N-terminal stretch at 1-19 is a signal peptide; it reads MYPAHLLVLLAVCVSLLGA. Positions 20–27 are excised as a propeptide; that stretch reads SDIPPLPL. Cystine bridges form between cysteine 38–cysteine 98, cysteine 54–cysteine 143, cysteine 56–cysteine 72, cysteine 71–cysteine 125, cysteine 78–cysteine 118, cysteine 87–cysteine 111, and cysteine 105–cysteine 116. 3 residues coordinate Ca(2+): tyrosine 55, glycine 57, and glycine 59. Residue histidine 75 is part of the active site. Residue aspartate 76 participates in Ca(2+) binding. Residue aspartate 119 is part of the active site.

This sequence belongs to the phospholipase A2 family. Group I subfamily. D49 sub-subfamily. It depends on Ca(2+) as a cofactor. As to expression, expressed by the venom gland.

The protein localises to the secreted. It catalyses the reaction a 1,2-diacyl-sn-glycero-3-phosphocholine + H2O = a 1-acyl-sn-glycero-3-phosphocholine + a fatty acid + H(+). Functionally, PLA2 catalyzes the calcium-dependent hydrolysis of the 2-acyl groups in 3-sn-phosphoglycerides. The sequence is that of Acidic phospholipase A2 from Aipysurus laevis (Olive sea snake).